The sequence spans 370 residues: MAVAAAAAATAMSAAGGGGASAARSISRFRGCLAGALLGDCVGAVYEAHDTVSLASVLSHVESLEPDPGTPGSARTETLYYTDDTAMTRALVQSLLAKEAFDEVDMAHRFAQEYKKDPDRGYGAGVITVFKKLLNPKCRDVYEPARAQFNGKGSYGNGGAMRVAGISLAYSSVQDVQKFARLSAQLTHASSLGYNGAILQALAVHLALQGVSSSEHFLEQLLGHMEELEGDAQSVLDAKELGMEERPYSSRLKKVGELLDQDVVSREEVVSELGNGIAAFESVPTAIYCFLRCMEPHPEIPSTFNSLQRTLIYSISLGGDTDTIATMAGAIAGAYYGMEQVPESWQQSCEGFEETDVLAQSLHRVFQESS.

Glutamate 47 contacts Mg(2+). A Phosphothreonine modification is found at threonine 70. 3 residues coordinate Mg(2+): threonine 82, aspartate 83, and aspartate 84. Residue aspartate 83 coordinates substrate. Residues 152–158 (KGSYGNG), histidine 188, leucine 241, and isoleucine 277 each bind substrate. Positions 320, 322, and 323 each coordinate Mg(2+).

This sequence belongs to the ADP-ribosylglycohydrolase family. Monomer. The cofactor is Mg(2+). Ubiquitous.

It is found in the nucleus. The protein localises to the cytoplasm. It localises to the chromosome. Its subcellular location is the mitochondrion matrix. The enzyme catalyses [(1''-&gt;2')-ADP-alpha-D-ribose](n) + H2O = [(1''-&gt;2')-ADP-alpha-D-ribose](n-1) + ADP-D-ribose. It catalyses the reaction 1''-O-acetyl-ADP-alpha-D-ribose + H2O = ADP-D-ribose + acetate + H(+). The catalysed reaction is O-(ADP-D-ribosyl)-L-seryl-[protein] + H2O = ADP-D-ribose + L-seryl-[protein]. It carries out the reaction alpha-NAD(+) + H2O = ADP-D-ribose + nicotinamide + H(+). With respect to regulation, the protein undergoes a dramatic conformational switch from closed to open states upon substrate-binding, which enables specific substrate recognition for the 1''-O-linkage. The glutamate flap (Glu-47) blocks substrate entrance to Mg(2+) in the unliganded closed state. In presence of substrate, Glu-47 is ejected from the active site: this closed-to-open transition significantly widens the substrate-binding channel and precisely positions the scissile 1''-O-linkage for cleavage while securing tightly 2'- and 3'-hydroxyls of ADP-ribose. Functionally, ADP-ribosylhydrolase that preferentially hydrolyzes the scissile alpha-O-linkage attached to the anomeric C1'' position of ADP-ribose and acts on different substrates, such as proteins ADP-ribosylated on serine and threonine, free poly(ADP-ribose) and O-acetyl-ADP-D-ribose. Specifically acts as a serine mono-ADP-ribosylhydrolase by mediating the removal of mono-ADP-ribose attached to serine residues on proteins, thereby playing a key role in DNA damage response. Serine ADP-ribosylation of proteins constitutes the primary form of ADP-ribosylation of proteins in response to DNA damage. Does not hydrolyze ADP-ribosyl-arginine, -cysteine, -diphthamide, or -asparagine bonds. Also able to degrade protein free poly(ADP-ribose), which is synthesized in response to DNA damage: free poly(ADP-ribose) acts as a potent cell death signal and its degradation by ADPRHL2 protects cells from poly(ADP-ribose)-dependent cell death, a process named parthanatos. Also hydrolyzes free poly(ADP-ribose) in mitochondria. Specifically digests O-acetyl-ADP-D-ribose, a product of deacetylation reactions catalyzed by sirtuins. Specifically degrades 1''-O-acetyl-ADP-D-ribose isomer, rather than 2''-O-acetyl-ADP-D-ribose or 3''-O-acetyl-ADP-D-ribose isomers. The chain is ADP-ribosylhydrolase ARH3 (Adprs) from Mus musculus (Mouse).